The following is a 63-amino-acid chain: Large ribosomal subunit protein eL37 (63 aa).

Zn(2+)-binding residues include Cys-20, Cys-23, Cys-35, and Cys-38. The C4-type zinc finger occupies 20 to 38 (CRRCGRRAFNVKKGYCAAC).

This sequence belongs to the eukaryotic ribosomal protein eL37 family. In terms of assembly, part of the 50S ribosomal subunit. It depends on Zn(2+) as a cofactor.

Its function is as follows. Binds to the 23S rRNA. The chain is Large ribosomal subunit protein eL37 from Thermococcus kodakarensis (strain ATCC BAA-918 / JCM 12380 / KOD1) (Pyrococcus kodakaraensis (strain KOD1)).